A 408-amino-acid chain; its full sequence is Retron Ec48 reverse transcriptase (408 aa).

The Reverse transcriptase domain occupies 43–269 (EELKAIAELP…EPIKVHGLRV (227 aa)). Mg(2+) is bound by residues D137, D216, and D217.

This sequence belongs to the bacterial reverse transcriptase family.

It catalyses the reaction DNA(n) + a 2'-deoxyribonucleoside 5'-triphosphate = DNA(n+1) + diphosphate. Functionally, reverse transcriptase (RT) component of antiviral defense system retron Ec48, composed of a non-coding RNA (ncRNA), this reverse transcriptase (RT) and the following membrane protein. Expression of this retron confers protection against bacteriophages lambda, T2, T4, T5 and T7. At multiplicity of infection (MOI) of 0.02 cultures grow normally when infected with lambda without collapsing, at MOI 2 cultures enter growth stasis. At MOI 3 cell membranes are permeabilized within 15 minutes of infection but do not lyse, suggesting the phage are not able to finish a replication cycle. Antiviral defense is suppressed by mutations that knockout the lambda gam expression or phage T7 gp5.9 expression; both viral genes inhibit host RecBCD. The Ec48 retron may sense the integrity of the RecBCD enzyme; when RecBCD is perturbed by viral proteins the Ec48 effector (the membrane protein) is activated, leading to abortive infection and bacterial growth arrest. Responsible for synthesis of msDNA-Ec48 (a branched molecule with RNA linked by a 2',5'-phosphodiester bond to ssDNA). The retron transcript serves as primer (from a conserved internal G residue) and template for the reaction, and codes for the RT. The sequence is that of Retron Ec48 reverse transcriptase from Escherichia coli.